The primary structure comprises 322 residues: Mitochondrial thiamine pyrophosphate carrier 1 (322 aa).

3 Solcar repeats span residues 12-111, 122-208, and 215-310; these read GSKT…VTLA, PAAA…LRVP, and PFGS…VLRL. Helical transmembrane passes span 18-38, 92-108, 128-148, 180-200, 221-241, and 285-302; these read MIAGATAGLIARFVIAPLDVV, LMYVSYSAIQFTTYRSV, FIAGASAGAVATTATYPLDLL, FFQGLGAGVGQIIPYMGIFFA, ATAGVLASVIAKTGIFPFDLI, and GLTVSLFKAAPASAVTMW.

It belongs to the mitochondrial carrier (TC 2.A.29) family.

The protein localises to the mitochondrion inner membrane. Functionally, mitochondrial transporter that mediates uptake of thiamine pyrophosphate (ThPP) into mitochondria. The polypeptide is Mitochondrial thiamine pyrophosphate carrier 1 (tpc1) (Sclerotinia sclerotiorum (strain ATCC 18683 / 1980 / Ss-1) (White mold)).